We begin with the raw amino-acid sequence, 189 residues long: Isopentenyl-diphosphate Delta-isomerase (189 aa).

Residues histidine 27 and histidine 34 each coordinate Mn(2+). Positions 32–171 (PLHFAFSTYI…PFVFSPWLVD (140 aa)) constitute a Nudix hydrolase domain. Cysteine 69 is an active-site residue. A Mg(2+)-binding site is contributed by cysteine 69. Mn(2+) is bound at residue histidine 71. Glutamate 89 contacts Mg(2+). The Mn(2+) site is built by glutamate 119 and glutamate 121. Glutamate 121 is a catalytic residue.

It belongs to the IPP isomerase type 1 family. It depends on Mg(2+) as a cofactor. Mn(2+) is required as a cofactor.

The protein resides in the cytoplasm. It catalyses the reaction isopentenyl diphosphate = dimethylallyl diphosphate. The protein operates within isoprenoid biosynthesis; dimethylallyl diphosphate biosynthesis; dimethylallyl diphosphate from isopentenyl diphosphate: step 1/1. In terms of biological role, catalyzes the 1,3-allylic rearrangement of the homoallylic substrate isopentenyl (IPP) to its highly electrophilic allylic isomer, dimethylallyl diphosphate (DMAPP). This is Isopentenyl-diphosphate Delta-isomerase from Corynebacterium glutamicum (strain ATCC 13032 / DSM 20300 / JCM 1318 / BCRC 11384 / CCUG 27702 / LMG 3730 / NBRC 12168 / NCIMB 10025 / NRRL B-2784 / 534).